We begin with the raw amino-acid sequence, 729 residues long: Ubiquitin carboxyl-terminal hydrolase BAP1 (729 aa).

The 232-residue stretch at 4–235 (GWLELESDPG…IRFNLMAVVP (232 aa)) folds into the UCH catalytic domain. The Arg-finger motif signature appears at 56 to 60 (RRSRR). Cys91 serves as the catalytic Nucleophile. The Proton donor role is filled by His169. Phosphoserine is present on Ser292. The disordered stretch occupies residues 301-351 (APAASEGNHTDGAEEAAGSCAQAPSHSPPNKPKLVVKPPGSSLNGVHPNPT). The HBM-like motif motif lies at 363-366 (NHNY). Phosphoserine occurs at positions 369 and 395. Disordered regions lie at residues 372-435 (QEEE…SADG) and 464-524 (SIKT…SPVT). The span at 395–409 (SDDEDDYEDDEEDDV) shows a compositional bias: acidic residues. Residues 480–524 (THSQPSPTPSNESTDTASEIGSAFNSPLRSPIRSANPTRPSSPVT) show a composition bias toward polar residues. Phosphothreonine is present on Thr493. Ser521, Ser537, Ser585, and Ser597 each carry phosphoserine. The tract at residues 575-623 (LTEGGKGSSPSIRPIQGSQGSSSPVEKEVVEATDSREKTGMVRPGEPLS) is disordered. Residues 582 to 598 (SSPSIRPIQGSQGSSSP) are compositionally biased toward polar residues. The interval 596 to 721 (SSPVEKEVVE…QRKPDRRKRS (126 aa)) is interaction with BRCA1. The segment covering 599-614 (VEKEVVEATDSREKTG) has biased composition (basic and acidic residues). The stretch at 636–656 (LKCVEAEIANYEACLKEEVEK) forms a coiled coil. Positions 642-686 (EIANYEACLKEEVEKRKKFKIDDQRRTHNYDEFICTFISMLAQEG) are interaction with YY1. In terms of domain architecture, ULD spans 670-698 (NYDEFICTFISMLAQEGMLANLVEQNISV). An interaction with nucleosomal DNA forming a DNA clamp with ASXL1 region spans residues 699 to 701 (RRR). The Classical bipartite Nuclear localization signal (NLS) motif lies at 699-722 (RRRQGVSIGRLHKQRKPDRRKRSR). The disordered stretch occupies residues 703–729 (GVSIGRLHKQRKPDRRKRSRPYKAKRQ). Residues 713–729 (RKPDRRKRSRPYKAKRQ) are positively charged C-terminal extension (CTE). The short motif at 717 to 724 (RRKRSRPY) is the Non-classical PY-nuclear localization signal (PY-NLS) element.

This sequence belongs to the peptidase C12 family. BAP1 subfamily. In terms of assembly, core component of the polycomb repressive deubiquitinase (PR-DUB) complex, at least composed of BAP1, one of ASXL1, ASXL2 or (probably) ASXL3, and one of MBD5 or MBD6. The PR-DUB core associates with a number of accessory proteins, including FOXK1, FOXK2, KDM1B, HCFC1, YY1 and OGT; KDM1B specifically associates with ASXL2 PR-DUB complexes. The BAP1 deubiquitinase activity is not required for PR-DUB assembly. Homodimerizes (via coiled-coil hinge-region between the UCH and ULD domains) to mediate assembly of 2 copies of the BAP1-ASXL heterodimer into a bisymmetric tetramer; dimerization enhances association with nucleosomes. The PR-DUB complex associates with nucleosomes to mediate deubiquitination of 'lys-120' of histone H2AK118ub1 substrates; the association requires the positively charged C-terminal tail of BAP1. Interacts (via ULD domain) with ASXL1 (via DEUBAD domain); the interaction is direct and forms a ubiquitin binding cleft. The interaction with ASXL1 stabilizes BAP1 but is not required for nucleosome binding. Associates (via C-terminus) with nucleosome and chromatosome complexes through direct interaction with DNA and the histone3/4 dimer; this association displaces the histone-2A C-terminal tail, extending and orienting the H2AK118ub1 substrate towards the BAP1 deubiquitinase active site. Also interacts (via arginine finger) directly with the histone H2A-H2B acidic patch; this interaction is not critical for nucleosome-chromatosome association but may play a role in orienting the H2AK118ub1 substrate towards the PR-DUB complex active site. Interacts with BRCA1 (via the RING finger). Interacts (via HBM-like motif) with HCFC1. Interacts (via a C-terminal region overlapping the ULD domain) with YY1; the interaction is direct and requires the interaction with HCFC1. Interacts (when phosphorylated at Thr-493) with FOXK1. Interacts (when phosphorylated at Thr-493) with FOXK2; leading to recruitment of the PR-DUB complex and repression of FOXK2 target genes. Interacts (via non-classical PY-NLS) with TNPO1/transportin-1 (via HEAT repeats 8-12); the interaction is direct, mediates BAP1 nuclear localization and disrupts BAP1 homodimerization. Interacts (via C-terminus) with KPNA1/importin alpha5 and KPNA2/importin alpha1; these interactions can contribute to BAP1 nuclear localization but are less important than the interaction with TNPO1/transportin-1. The interaction with TNPO1/transportin-1 disrupts homodimerization and blocks ubiquitination by UBE2O. In terms of processing, ubiquitinated: monoubiquitinated at multiple sites within its nuclear localization signal (NLS) BY UBE2O, leading to cytoplasmic retention. Able to mediate autodeubiquitination via intramolecular interactions to counteract cytoplasmic retention. Monoubiquitinated on at least 4 sites near or within its PY-NLS. In terms of tissue distribution, highly expressed in testis, placenta and ovary. Expressed in breast. levels in the placenta increase over the course of pregnancy.

It localises to the cytoplasm. It is found in the nucleus. The protein localises to the chromosome. It catalyses the reaction Thiol-dependent hydrolysis of ester, thioester, amide, peptide and isopeptide bonds formed by the C-terminal Gly of ubiquitin (a 76-residue protein attached to proteins as an intracellular targeting signal).. Deubiquitinating enzyme that plays a key role in chromatin by mediating deubiquitination of histone H2A and HCFC1. Catalytic component of the polycomb repressive deubiquitinase (PR-DUB) complex, a complex that specifically mediates deubiquitination of histone H2A monoubiquitinated at 'Lys-120' (H2AK119ub1). Does not deubiquitinate monoubiquitinated histone H2B. The PR-DUB complex is an epigenetic regulator of gene expression and acts as a transcriptional coactivator, affecting genes involved in development, cell communication, signaling, cell proliferation and cell viability. Antagonizes PRC1 mediated H2AK119ub1 monoubiquitination. As part of the PR-DUB complex, associates with chromatin enriched in histone marks H3K4me1, H3K4me3, and H3K27Ac, but not in H3K27me3. Recruited to specific gene-regulatory regions by YY1. Acts as a regulator of cell growth by mediating deubiquitination of HCFC1 N-terminal and C-terminal chains, with some specificity toward 'Lys-48'-linked polyubiquitin chains compared to 'Lys-63'-linked polyubiquitin chains. Deubiquitination of HCFC1 does not lead to increase stability of HCFC1. Interferes with the BRCA1 and BARD1 heterodimer activity by inhibiting their ability to mediate ubiquitination and autoubiquitination. It however does not mediate deubiquitination of BRCA1 and BARD1. Able to mediate autodeubiquitination via intramolecular interactions to counteract monoubiquitination at the nuclear localization signal (NLS), thereby protecting it from cytoplasmic sequestration. Negatively regulates epithelial-mesenchymal transition (EMT) of trophoblast stem cells during placental development by regulating genes involved in epithelial cell integrity, cell adhesion and cytoskeletal organization. This is Ubiquitin carboxyl-terminal hydrolase BAP1 from Homo sapiens (Human).